Consider the following 475-residue polypeptide: Probable phenylalanine--tRNA ligase alpha subunit (475 aa).

The interval 2–151 (TAVAQKIIEN…KRKLVSRRKK (150 aa)) is contains the major tRNA-Phe binding sites. Residues T309, 351 to 353 (QVE), and Y391 each bind L-phenylalanine. Mg(2+) is bound at residue E393. An L-phenylalanine-binding site is contributed by F417.

The protein belongs to the class-II aminoacyl-tRNA synthetase family. Phe-tRNA synthetase alpha subunit type 2 subfamily. Tetramer of two alpha and two beta subunits. It depends on Mg(2+) as a cofactor.

The protein resides in the cytoplasm. The catalysed reaction is tRNA(Phe) + L-phenylalanine + ATP = L-phenylalanyl-tRNA(Phe) + AMP + diphosphate + H(+). This is Probable phenylalanine--tRNA ligase alpha subunit from Encephalitozoon cuniculi (strain GB-M1) (Microsporidian parasite).